A 144-amino-acid polypeptide reads, in one-letter code: Large ribosomal subunit protein uL13 (144 aa).

The segment at 125 to 144 (YRGPEHPHQAQKPQPLEVKA) is disordered.

The protein belongs to the universal ribosomal protein uL13 family. In terms of assembly, part of the 50S ribosomal subunit.

This protein is one of the early assembly proteins of the 50S ribosomal subunit, although it is not seen to bind rRNA by itself. It is important during the early stages of 50S assembly. The chain is Large ribosomal subunit protein uL13 from Aquifex aeolicus (strain VF5).